We begin with the raw amino-acid sequence, 498 residues long: Probable cytosol aminopeptidase (498 aa).

Lysine 264 and aspartate 269 together coordinate Mn(2+). Lysine 276 is a catalytic residue. Residues aspartate 287, aspartate 346, and glutamate 348 each contribute to the Mn(2+) site. The active site involves arginine 350.

Belongs to the peptidase M17 family. The cofactor is Mn(2+).

It localises to the cytoplasm. The catalysed reaction is Release of an N-terminal amino acid, Xaa-|-Yaa-, in which Xaa is preferably Leu, but may be other amino acids including Pro although not Arg or Lys, and Yaa may be Pro. Amino acid amides and methyl esters are also readily hydrolyzed, but rates on arylamides are exceedingly low.. The enzyme catalyses Release of an N-terminal amino acid, preferentially leucine, but not glutamic or aspartic acids.. In terms of biological role, presumably involved in the processing and regular turnover of intracellular proteins. Catalyzes the removal of unsubstituted N-terminal amino acids from various peptides. In Brucella anthropi (strain ATCC 49188 / DSM 6882 / CCUG 24695 / JCM 21032 / LMG 3331 / NBRC 15819 / NCTC 12168 / Alc 37) (Ochrobactrum anthropi), this protein is Probable cytosol aminopeptidase.